We begin with the raw amino-acid sequence, 372 residues long: Pluviatolide O-methyltransferase (372 aa).

Glycine 214, aspartate 237, aspartate 257, methionine 258, and lysine 271 together coordinate S-adenosyl-L-homocysteine. Histidine 275 (proton acceptor) is an active-site residue. Residues aspartate 306 and glutamate 338 contribute to the active site.

The protein belongs to the class I-like SAM-binding methyltransferase superfamily. Cation-independent O-methyltransferase family. COMT subfamily. Homodimer. Mostly expressed in stems, and, to a lower extent, in leaves.

The enzyme catalyses (-)-pluviatolide + S-adenosyl-L-methionine = (-)-bursehernin + S-adenosyl-L-homocysteine + H(+). The protein operates within aromatic compound metabolism; phenylpropanoid biosynthesis. Functionally, O-methyltransferase involved in the biosynthesis of etoposide, a chemotherapeutic compound of the topoisomerase inhibitor family. Catalyzes the methylation of (-)-pluviatolide to produce (-)-bursehernin. This chain is Pluviatolide O-methyltransferase, found in Sinopodophyllum hexandrum (Himalayan may apple).